Here is a 461-residue protein sequence, read N- to C-terminus: Diacylglycerol O-acyltransferase 1 (461 aa).

Positions 1–38 are disordered; sequence MQDSMDDSLREAEGRQDDSEVSSGTTLGSSTPEDSGVT. Residues 1–112 are Cytoplasmic-facing; that stretch reads MQDSMDDSLR…TLVVAWHTSS (112 aa). Basic and acidic residues predominate over residues 7–18; the sequence is DSLREAEGRQDD. Polar residues predominate over residues 21 to 33; sequence VSSGTTLGSSTPE. The helical transmembrane segment at 113-133 threads the bilayer; sequence FIYMTVLVLFLAANPLMWWFM. The Lumenal segment spans residues 134–230; it reads VPYMVYYVWN…ARPQVATGPR (97 aa). Residues 231–251 form a helical membrane-spanning segment; it reads YIFGYHPHGVGALGAFGAIAT. Over 252–258 the chain is Cytoplasmic; it reads EGCNWSK. Residues 259-279 form a helical membrane-spanning segment; the sequence is VFAGIPACLCTLVNQFQIPIY. Residues 280–332 are Lumenal-facing; that stretch reads RDYLLGLGCTSVARKNVLKVLEQNYSVCIVVGGAQEALLSRVGSTELVLNKRK. Residues 333 to 353 traverse the membrane as a helical segment; the sequence is GFIKLALETGNVNLVPIYAFG. The Cytoplasmic portion of the chain corresponds to 354 to 461; the sequence is ETDCFNVLDT…YAGKELKIVE (108 aa).

This sequence belongs to the diacylglycerol acyltransferase family.

The protein localises to the lipid droplet. Its subcellular location is the endoplasmic reticulum membrane. The catalysed reaction is an acyl-CoA + a 1,2-diacyl-sn-glycerol = a triacyl-sn-glycerol + CoA. It carries out the reaction a 2-acylglycerol + an acyl-CoA = a 1,2-diacyl-sn-glycerol + CoA. Its pathway is glycerolipid metabolism; triacylglycerol biosynthesis. Functionally, catalyzes the terminal and only committed step in triacylglycerol (TAG) synthesis by using diacylglycerol (DAG) and fatty acyl-CoA as substrates. Required for storage lipid synthesis. Major DAG esterifying enzyme in stationary phase when TAG production is particularly active. Involved in lipid particle synthesis from the endoplasmic reticulum, promoting localized TAG production at discrete ER subdomains. This Eremothecium gossypii (strain ATCC 10895 / CBS 109.51 / FGSC 9923 / NRRL Y-1056) (Yeast) protein is Diacylglycerol O-acyltransferase 1 (DGA1).